We begin with the raw amino-acid sequence, 326 residues long: Malate dehydrogenase (326 aa).

11-17 (GAAGQIG) is an NAD(+) binding site. R92 and R98 together coordinate substrate. NAD(+) contacts are provided by residues N105, Q112, and 129-131 (VGN). Substrate-binding residues include N131 and R162. The active-site Proton acceptor is H187.

This sequence belongs to the LDH/MDH superfamily. MDH type 2 family.

It carries out the reaction (S)-malate + NAD(+) = oxaloacetate + NADH + H(+). Catalyzes the reversible oxidation of malate to oxaloacetate. The chain is Malate dehydrogenase from Leptospira interrogans serogroup Icterohaemorrhagiae serovar Lai (strain 56601).